We begin with the raw amino-acid sequence, 295 residues long: MFEKTTDMDIRCNIEENGRISKPKDNKEIRETQAKMPSTYLKEQPGTYPAPGSSELCAKNKSSSAGDPEYCRRILVRDAKGSIREIILPKGLDLDRPKRSRTSFTAEQLYRLEMEFQRCQYVVGRERTDLSRQLNLSETQVKVWFQNRRTKQKKDQGKDSELRSVVSETAATCSVLRLLEQGRLLSPPGLPGLMPPCTTGTLRAPNSSGPGTRSLATVTSTPPHQPGLHPSPTGHNIFNMPVPSLLGTVANRLSSHPLTMAGNLHELSARYLSSSAFEPYSRSISKDSLDKKLLD.

The span at 20-33 (ISKPKDNKEIRETQ) shows a compositional bias: basic and acidic residues. A disordered region spans residues 20–63 (ISKPKDNKEIRETQAKMPSTYLKEQPGTYPAPGSSELCAKNKSS). The homeobox DNA-binding region spans 97–156 (PKRSRTSFTAEQLYRLEMEFQRCQYVVGRERTDLSRQLNLSETQVKVWFQNRRTKQKKDQ). Positions 203-226 (RAPNSSGPGTRSLATVTSTPPHQP) are disordered. Residues 204–222 (APNSSGPGTRSLATVTSTP) are compositionally biased toward polar residues.

It belongs to the EMX homeobox family.

It localises to the nucleus. May play a role in the specification and maintenance of basal forebrain identity. The chain is Ventral anterior homeobox 1a (vax1-a) from Xenopus laevis (African clawed frog).